Reading from the N-terminus, the 65-residue chain is Large ribosomal subunit protein uL29 (65 aa).

The protein belongs to the universal ribosomal protein uL29 family.

The sequence is that of Large ribosomal subunit protein uL29 from Desulforapulum autotrophicum (strain ATCC 43914 / DSM 3382 / VKM B-1955 / HRM2) (Desulfobacterium autotrophicum).